The sequence spans 638 residues: Chaperone protein DnaK 2 (638 aa).

Residue Thr-199 is modified to Phosphothreonine; by autocatalysis. Residues 604-626 (AKEQAQSAPEGAQEADAAPADDV) form a disordered region. Low complexity predominate over residues 613–624 (EGAQEADAAPAD).

It belongs to the heat shock protein 70 family.

Functionally, acts as a chaperone. The polypeptide is Chaperone protein DnaK 2 (Colwellia psychrerythraea (strain 34H / ATCC BAA-681) (Vibrio psychroerythus)).